The primary structure comprises 160 residues: MPHSYGIRARTRYTFQRGFREHGQIRLSTYLKTYKVGDIVDIKVNGAVQKGMPHKYYHGKTGVVYNVTQSSVGVLIYKVVGNRYMEKRVNVRIEHVKHSKCRQDFLDRVKANEAKRKEAKAQGKTVQLRRQPAPPATAHFVSTENNEPVTLHPVAYDTTI.

The disordered stretch occupies residues 114–140; it reads AKRKEAKAQGKTVQLRRQPAPPATAHF.

The protein belongs to the eukaryotic ribosomal protein eL21 family. Component of the large ribosomal subunit (LSU). Mature yeast ribosomes consist of a small (40S) and a large (60S) subunit. The 40S small subunit contains 1 molecule of ribosomal RNA (18S rRNA) and at least 33 different proteins. The large 60S subunit contains 3 rRNA molecules (25S, 5.8S and 5S rRNA) and at least 46 different proteins.

It is found in the cytoplasm. In terms of biological role, component of the ribosome, a large ribonucleoprotein complex responsible for the synthesis of proteins in the cell. The small ribosomal subunit (SSU) binds messenger RNAs (mRNAs) and translates the encoded message by selecting cognate aminoacyl-transfer RNA (tRNA) molecules. The large subunit (LSU) contains the ribosomal catalytic site termed the peptidyl transferase center (PTC), which catalyzes the formation of peptide bonds, thereby polymerizing the amino acids delivered by tRNAs into a polypeptide chain. The nascent polypeptides leave the ribosome through a tunnel in the LSU and interact with protein factors that function in enzymatic processing, targeting, and the membrane insertion of nascent chains at the exit of the ribosomal tunnel. This is Large ribosomal subunit protein eL21B (rpl2102) from Schizosaccharomyces pombe (strain 972 / ATCC 24843) (Fission yeast).